The chain runs to 175 residues: uncharacterized protein (175 aa).

Disordered regions lie at residues 1 to 32 and 156 to 175; these read MSHK…KLRH and KQKQ…KYRQ. Residues 14–24 are compositionally biased toward low complexity; sequence LLSSSSPVAKK.

This is an uncharacterized protein from Mycoplasma pneumoniae (strain ATCC 29342 / M129 / Subtype 1) (Mycoplasmoides pneumoniae).